We begin with the raw amino-acid sequence, 352 residues long: N-acetyl-gamma-glutamyl-phosphate reductase (352 aa).

C155 is a catalytic residue.

Belongs to the NAGSA dehydrogenase family. Type 1 subfamily.

It localises to the cytoplasm. It catalyses the reaction N-acetyl-L-glutamate 5-semialdehyde + phosphate + NADP(+) = N-acetyl-L-glutamyl 5-phosphate + NADPH + H(+). It functions in the pathway amino-acid biosynthesis; L-arginine biosynthesis; N(2)-acetyl-L-ornithine from L-glutamate: step 3/4. Its function is as follows. Catalyzes the NADPH-dependent reduction of N-acetyl-5-glutamyl phosphate to yield N-acetyl-L-glutamate 5-semialdehyde. The chain is N-acetyl-gamma-glutamyl-phosphate reductase from Brachyspira hyodysenteriae (strain ATCC 49526 / WA1).